A 458-amino-acid chain; its full sequence is F-box/WD repeat-containing protein 9 (458 aa).

An N-acetylmethionine modification is found at Met1. Disordered regions lie at residues Met1 to Ala30 and Lys42 to Glu64. Residues Asp16 to Pro26 show a composition bias toward acidic residues. Ser18 is subject to Phosphoserine. Thr55 is subject to Phosphothreonine. Position 59 is a phosphoserine (Ser59). The region spanning Glu76–Arg123 is the F-box domain. 7 WD repeats span residues Gly171–Asn210, Lys220–Gly261, Lys264–Lys301, Leu305–Arg342, Gln344–Ile381, Gly387–Cys424, and Arg427–Ala458.

As to quaternary structure, interacts with SKP1 and CUL1.

Its function is as follows. Substrate-recognition component of the SCF (SKP1-CUL1-F-box protein)-type E3 ubiquitin ligase complex. The protein is F-box/WD repeat-containing protein 9 (FBXW9) of Homo sapiens (Human).